The primary structure comprises 602 residues: Exopolysaccharide phosphotransferase SCO2594 (602 aa).

Positions Pro-251 to Leu-271 are disordered.

This sequence belongs to the stealth family.

This Streptomyces coelicolor (strain ATCC BAA-471 / A3(2) / M145) protein is Exopolysaccharide phosphotransferase SCO2594.